The sequence spans 390 residues: MAMVTGGWGGPGGDTNGVDKAGGSYPRATEDDSASPPGATSDAEPGDEERPGLQVDCVVCGDKSSGKHYGVFTCEGCKSFFKRTIRRNLSYTCRSNRDCQIDQHHRNQCQYCRLKKCFRVGMRKEAVQPGPIPHALPGPAACSPPGAAGVEPFAGPPVSELIAQLLRAEPYPAAGRFGGGGAVLGIDNVCELAARLLFSTVEWARHAPFFPELPAADQVGLLRLSWSELFVLNAAQAPVPLHTAPLLAAAGLHAGPMAAERAVAFMDQVRAFQEQVDKLGRLQVDAAEYGCLKAIALFTPDACGLSDPAHVESLQEKAQVALTEYVRAQYPSQPQRFGRLLLRLPALRAVPASLISQLFFMRLVGKTPIETLIRDMLLSGSTFNWPYGSG.

Gly residues predominate over residues 1–15; it reads MAMVTGGWGGPGGDT. The tract at residues 1 to 50 is disordered; that stretch reads MAMVTGGWGGPGGDTNGVDKAGGSYPRATEDDSASPPGATSDAEPGDEER. Phosphoserine is present on residues serine 35 and serine 41. The segment at residues 54-129 is a DNA-binding region (nuclear receptor); it reads QVDCVVCGDK…VGMRKEAVQP (76 aa). 2 consecutive NR C4-type zinc fingers follow at residues 57 to 77 and 93 to 117; these read CVVC…CEGC and CRSN…LKKC. An NR LBD domain is found at 157-380; the sequence is PVSELIAQLL…TLIRDMLLSG (224 aa). The segment at 314–390 is important for dimerization; sequence LQEKAQVALT…STFNWPYGSG (77 aa).

The protein belongs to the nuclear hormone receptor family. NR2 subfamily. Binds DNA as dimer; homodimer and heterodimer with NR2F2 and probably NR2F1. Interacts with THRB.

The protein localises to the nucleus. Transcription factor predominantly involved in transcriptional repression. Binds to promoter/enhancer response elements that contain the imperfect 5'-AGGTCA-3' direct or inverted repeats with various spacings which are also recognized by other nuclear hormone receptors. Involved in modulation of hormonal responses. Represses transcriptional activity of the lutropin-choriogonadotropic hormone receptor/LHCGR gene, the renin/REN gene and the oxytocin-neurophysin/OXT gene. Represses the triiodothyronine-dependent and -independent transcriptional activity of the thyroid hormone receptor gene in a cell type-specific manner. The corepressing function towards thyroid hormone receptor beta/THRB involves at least in part the inhibition of THRB binding to triiodothyronine response elements (TREs) by NR2F6. Inhibits NFATC transcription factor DNA binding and subsequently its transcriptional activity. Acts as transcriptional repressor of IL-17 expression in Th-17 differentiated CD4(+) T cells and may be involved in induction and/or maintenance of peripheral immunological tolerance and autoimmunity. Involved in development of forebrain circadian clock; is required early in the development of the locus coeruleus (LC). The chain is Nuclear receptor subfamily 2 group F member 6 (Nr2f6) from Rattus norvegicus (Rat).